A 556-amino-acid polypeptide reads, in one-letter code: Polypeptide N-acetylgalactosaminyltransferase 13 (556 aa).

The Cytoplasmic portion of the chain corresponds to 1–4 (MRRL). A helical; Signal-anchor for type II membrane protein transmembrane segment spans residues 5–27 (VYCKVVLATSLMWVLVDVFLLLY). Residues 28-556 (FSECNKCDDK…WLLRNMTLGT (529 aa)) are Lumenal-facing. Asn94 and Asn116 each carry an N-linked (GlcNAc...) asparagine glycan. 5 disulfide bridges follow: Cys105–Cys338, Cys329–Cys407, Cys441–Cys458, Cys481–Cys496, and Cys522–Cys539. The tract at residues 114–224 (LPNTSVVIVF…LGWLEPLLAR (111 aa)) is catalytic subdomain A. 2 residues coordinate substrate: Asp155 and Arg185. Mn(2+) contacts are provided by Asp208 and His210. The segment at 284–346 (PVRTPTMAGG…TCSHVGHVFR (63 aa)) is catalytic subdomain B. Trp315 provides a ligand contact to substrate. His343 contributes to the Mn(2+) binding site. Residues Arg346 and Tyr351 each coordinate substrate. One can recognise a Ricin B-type lectin domain in the interval 428–550 (YSLGEIRNVE…GSRSQQWLLR (123 aa)). Asn551 is a glycosylation site (N-linked (GlcNAc...) asparagine).

Belongs to the glycosyltransferase 2 family. GalNAc-T subfamily. Mn(2+) serves as cofactor.

The protein localises to the golgi apparatus membrane. It carries out the reaction L-seryl-[protein] + UDP-N-acetyl-alpha-D-galactosamine = a 3-O-[N-acetyl-alpha-D-galactosaminyl]-L-seryl-[protein] + UDP + H(+). It catalyses the reaction L-threonyl-[protein] + UDP-N-acetyl-alpha-D-galactosamine = a 3-O-[N-acetyl-alpha-D-galactosaminyl]-L-threonyl-[protein] + UDP + H(+). The protein operates within protein modification; protein glycosylation. Its function is as follows. Catalyzes the initial reaction in O-linked oligosaccharide biosynthesis, the transfer of an N-acetyl-D-galactosamine (GalNAc) residue from UDP-GalNAc to a serine or threonine residue on the protein receptor. Generates GalNAc-O-Ser/Thr structure also known as Tn antigen, which itself is immunogenic but also serves as a precursor for the synthesis of different mucin-type O-glycan core structures. Contributes to the synthesis of O-linked glycans on mucins and proteoglycans of the central nervous system. Can glycosylate both unmodified peptides and glycopeptides that already contain an O-linked GalNAc sugar. Transfers GalNAc to Thr-/Ser-rich tandem repeats GTTPSPVPTTSTTSAP of MUC5AC. Transfers GalNAc to three consecutive serine/threonine residues on SDC3 forming a triplet-Tn epitope expressed in Purkinje cells of the developing brain. May promote neurogenesis through glycosylation and stabilization of PDPN. The polypeptide is Polypeptide N-acetylgalactosaminyltransferase 13 (Galnt13) (Rattus norvegicus (Rat)).